A 484-amino-acid chain; its full sequence is Putative beta-barrel assembly-enhancing protease (484 aa).

The first 23 residues, 1–23, serve as a signal peptide directing secretion; it reads MKFFPTRTLLCLCIAAPCLPAIA. H133 contributes to the Zn(2+) binding site. Residue E134 is part of the active site. Positions 137 and 198 each coordinate Zn(2+). Residue D202 is the Proton donor of the active site. TPR repeat units lie at residues 307–340, 341–374, 376–408, and 426–459; these read PSIQ…QPDN, HFYL…TPNN, VLTI…NPND, and AEDL…VELG.

The protein belongs to the peptidase M48 family. BepA subfamily. It depends on Zn(2+) as a cofactor.

The protein resides in the periplasm. Functionally, functions both as a chaperone and a metalloprotease. Maintains the integrity of the outer membrane by promoting either the assembly or the elimination of outer membrane proteins, depending on their folding state. The sequence is that of Putative beta-barrel assembly-enhancing protease from Vibrio cholerae serotype O1 (strain ATCC 39315 / El Tor Inaba N16961).